The sequence spans 1209 residues: DNA-directed RNA polymerase subunit beta' (1209 aa).

Cysteine 60, cysteine 62, cysteine 75, and cysteine 78 together coordinate Zn(2+). Mg(2+)-binding residues include aspartate 450, aspartate 452, and aspartate 454. Cysteine 819, cysteine 893, cysteine 900, and cysteine 903 together coordinate Zn(2+).

It belongs to the RNA polymerase beta' chain family. The RNAP catalytic core consists of 2 alpha, 1 beta, 1 beta' and 1 omega subunit. When a sigma factor is associated with the core the holoenzyme is formed, which can initiate transcription. The cofactor is Mg(2+). Zn(2+) serves as cofactor.

It carries out the reaction RNA(n) + a ribonucleoside 5'-triphosphate = RNA(n+1) + diphosphate. Functionally, DNA-dependent RNA polymerase catalyzes the transcription of DNA into RNA using the four ribonucleoside triphosphates as substrates. This is DNA-directed RNA polymerase subunit beta' from Streptococcus mutans serotype c (strain ATCC 700610 / UA159).